Consider the following 554-residue polypeptide: MRSKKMTHGLEKAPHRSLLHALGLTREELARPLVGVVNAANEVVPGHIHLDDIAEAVKAGVRAAGGTPLEFPAIAVCDGLAMNHEGMRFSLPSRELIADSIEIMATAHPFDALVFIPNCDKSVPGMLMAMLRLDVPSVMVSGGPMLAGATLAGRADLITVFEGVGRVQRGDMTEAELDELVEGACPGCGSCAGMFTANSMNCLAETIGLALPGNGTTPAVTAARIRLAKHAGMKVMEMLERNIRPRDIVTEKAVANAVAVDMALGCSTNTVLHLPAVFAEAGLDLTLDIFDKVSRKTPNLCKLSPAGHHHIQDLHAAGGIPAVMAELDSIGLIDRSAMTVTGRTVGENLDALGAKVRDADVIRSVDAPYSPQGGIAILKGSLAPGGAVVKQSAVAPEMMVREAVARVFDSEEAACEAIMGGRIKAGDAIVIRYEGPKGGPGMREMLTPTSAIAGMGLGADVALITDGRFSGGTRGAAIGHVSPEAAEGGPIGLVQEGDRIRIDIPARALDLLVDEDELARRRAVFVPVEKEITSPLLRRYARMVSSAATGARQR.

Asp-78 contributes to the Mg(2+) binding site. Cys-119 contributes to the [2Fe-2S] cluster binding site. Asp-120 and Lys-121 together coordinate Mg(2+). The residue at position 121 (Lys-121) is an N6-carboxylysine. Cys-191 serves as a coordination point for [2Fe-2S] cluster. A Mg(2+)-binding site is contributed by Glu-444. Ser-470 functions as the Proton acceptor in the catalytic mechanism.

Belongs to the IlvD/Edd family. In terms of assembly, homodimer. [2Fe-2S] cluster serves as cofactor. It depends on Mg(2+) as a cofactor.

The enzyme catalyses (2R)-2,3-dihydroxy-3-methylbutanoate = 3-methyl-2-oxobutanoate + H2O. It catalyses the reaction (2R,3R)-2,3-dihydroxy-3-methylpentanoate = (S)-3-methyl-2-oxopentanoate + H2O. Its pathway is amino-acid biosynthesis; L-isoleucine biosynthesis; L-isoleucine from 2-oxobutanoate: step 3/4. The protein operates within amino-acid biosynthesis; L-valine biosynthesis; L-valine from pyruvate: step 3/4. Functions in the biosynthesis of branched-chain amino acids. Catalyzes the dehydration of (2R,3R)-2,3-dihydroxy-3-methylpentanoate (2,3-dihydroxy-3-methylvalerate) into 2-oxo-3-methylpentanoate (2-oxo-3-methylvalerate) and of (2R)-2,3-dihydroxy-3-methylbutanoate (2,3-dihydroxyisovalerate) into 2-oxo-3-methylbutanoate (2-oxoisovalerate), the penultimate precursor to L-isoleucine and L-valine, respectively. The protein is Dihydroxy-acid dehydratase of Nitratidesulfovibrio vulgaris (strain DP4) (Desulfovibrio vulgaris).